A 100-amino-acid polypeptide reads, in one-letter code: Signal recognition particle 19 kDa protein (100 aa).

Belongs to the SRP19 family. As to quaternary structure, part of the signal recognition particle protein translocation system, which is composed of SRP and FtsY. Archaeal SRP consists of a 7S RNA molecule of 300 nucleotides and two protein subunits: SRP54 and SRP19.

The protein resides in the cytoplasm. Functionally, involved in targeting and insertion of nascent membrane proteins into the cytoplasmic membrane. Binds directly to 7S RNA and mediates binding of the 54 kDa subunit of the SRP. The protein is Signal recognition particle 19 kDa protein of Caldivirga maquilingensis (strain ATCC 700844 / DSM 13496 / JCM 10307 / IC-167).